A 250-amino-acid polypeptide reads, in one-letter code: Probable transcriptional regulatory protein DIP1378 (250 aa).

A disordered region spans residues 1–22 (MSGHSKWATTKHKKAANDAKRG).

It belongs to the TACO1 family.

Its subcellular location is the cytoplasm. The chain is Probable transcriptional regulatory protein DIP1378 from Corynebacterium diphtheriae (strain ATCC 700971 / NCTC 13129 / Biotype gravis).